The sequence spans 996 residues: Filament-like plant protein 5 (996 aa).

The segment at 1-20 (MEGRGWPWKRKSSDKATTEK) is disordered. Coiled-coil stretches lie at residues 59 to 94 (THMS…TKES), 133 to 248 (TAED…KYDL), 280 to 301 (VKKI…RKKL), and 359 to 387 (LTRR…LQVS). Disordered regions lie at residues 409-482 (NNDK…SSSR) and 496-534 (VGSD…DEDT). The segment covering 417 to 428 (SNSRNLSESLSS) has biased composition (low complexity). Over residues 471 to 482 (VNGSSKPRSSSR) the composition is skewed to polar residues. Residues 503-527 (ANSASKSSNSVCSRRSVEKQSSSKS) show a composition bias toward low complexity. Coiled-coil stretches lie at residues 601-622 (QNSE…VANI), 737-841 (DSSC…FTTE), and 876-906 (NQEK…QSLQ). A disordered region spans residues 962–996 (IMKSSSVSSSSKEDNEKHTRGLGRFFSSKSKNSAR).

Belongs to the FPP family. As to quaternary structure, interacts with WPP/MAF proteins.

The protein is Filament-like plant protein 5 (FPP5) of Arabidopsis thaliana (Mouse-ear cress).